Consider the following 1203-residue polypeptide: MTNPSGHNLPANSVAESYEGEFGCTLMDLRKLMELRAADAVTQISAHYGSVQEICARLKTSPVEGLSGNPADLEKRRLVFGKNMIPPKKPKTFLELVWEALQDVTLIILEIAAIISLVLSFYRPPGGENEICGHIVSNPEEDEEGETGWIEGAAILASVIIVVFVTAFNDWSKEKQFRGLQSRIELEQKFSIIRNGQLIQLPVAEIVVGDIAQVKYGDLLPADGILIQGNDLKIDESSLTGESDHVKKTLDKDPMLLSGTHVMEGSGRMVVTAVGINSQTGIIFTLLGANEEEDDEKKKKGKKQGVSENRNKAKTQDGVALEIQPLNSQEGLDSEEKEKKASKGPKKEKSVLQGKLTRLAVQIGKAGLIMSILTVLILILYFVVDNFVIQRRAWLPECTPVYIQYFVKFFIIGVTVLVVAVPEGLPLAVTISLAYSVKKMMKDNNLVRHLDACETMGNATAICSDKTGTLTMNRMTVVQAYIGGTHYRQIPKPDDLPPNVLDLIVNSICINSAYTSKILPPEKEGGLPRQVGNKTECGLLGFVTDLKQDYQAVRSEMPEEKLFKVYTFNSVRKSMSTVIRKPEGGFRVFSKGASEIMLRKCDRILNKEGGIVPFKTKDRDNMVRNVIEPMASEGLRTIGIAYRDFDGEEPSWENENEIFTGLVCIAVVGIEDPVRPEVPDAINKCKRAGITVRMVTGDNVNTARAIATKCGILTPGDDFLCLEGKEFNRLIRNEKGEVEQEKLDKVWPRLRVLARSSPTDKHTLVKGIIDSNIGEQRQVVAVTGDGTNDGPALKKADVGFAMGIAGTDVAKEASDIILTDDNFTSIVKAVMWGRNVYDSISKFLQFQLTVNVVAVIVAFSGACITQDSPLKAVQMLWVNLIMDTFASLALATEPPTDSLLRRRPYGRNKPLISRTMMKNILGHAVYQLGIVFLLVFAGDKLFDIDSGRKAPLNSPPSQHYTIVFNTFVLMQLFNEINSRKIHGEKNVFAGVYRNIIFCSVVLGTFFCQILIVEVGGKPFSCTNLTMEQWMWCLFIGIGELLWGQVISAIPTKSLKFLKEAGHGSDKEEISKDAEGLEEIDHAEMELRRGQILWVRGLNRIQTQIRVVKVFHSFRDVIHKSKNQVSIHSFMTQPEYAADDEMSQSFLNQEESPSLASKSRITKRLSDAETVSQNNTNNNAVDCHQVQIVASHPNSPLQSQETPV.

Topologically, residues 1 to 92 (MTNPSGHNLP…NMIPPKKPKT (92 aa)) are cytoplasmic. S13 is modified (phosphoserine). Residues 93–113 (FLELVWEALQDVTLIILEIAA) form a helical membrane-spanning segment. Residues 114 to 150 (IISLVLSFYRPPGGENEICGHIVSNPEEDEEGETGWI) lie on the Extracellular side of the membrane. The helical transmembrane segment at 151–171 (EGAAILASVIIVVFVTAFNDW) threads the bilayer. The Cytoplasmic segment spans residues 172–356 (SKEKQFRGLQ…KEKSVLQGKL (185 aa)). The tract at residues 294 to 319 (DDEKKKKGKKQGVSENRNKAKTQDGV) is disordered. Residues S328 and S334 each carry the phosphoserine modification. Residues 330–349 (EGLDSEEKEKKASKGPKKEK) form a disordered region. Basic and acidic residues predominate over residues 334–349 (SEEKEKKASKGPKKEK). The helical transmembrane segment at 357–376 (TRLAVQIGKAGLIMSILTVL) threads the bilayer. Topologically, residues 377-409 (ILILYFVVDNFVIQRRAWLPECTPVYIQYFVKF) are extracellular. A helical membrane pass occupies residues 410 to 427 (FIIGVTVLVVAVPEGLPL). Over 428–840 (AVTISLAYSV…MWGRNVYDSI (413 aa)) the chain is Cytoplasmic. The active-site 4-aspartylphosphate intermediate is the D465. Mg(2+) contacts are provided by D785 and D789. The chain crosses the membrane as a helical span at residues 841–860 (SKFLQFQLTVNVVAVIVAFS). The Extracellular segment spans residues 861–870 (GACITQDSPL). A helical membrane pass occupies residues 871–891 (KAVQMLWVNLIMDTFASLALA). The Cytoplasmic segment spans residues 892–911 (TEPPTDSLLRRRPYGRNKPL). A helical transmembrane segment spans residues 912–934 (ISRTMMKNILGHAVYQLGIVFLL). The Extracellular portion of the chain corresponds to 935-952 (VFAGDKLFDIDSGRKAPL). The chain crosses the membrane as a helical span at residues 953-974 (NSPPSQHYTIVFNTFVLMQLFN). The Cytoplasmic portion of the chain corresponds to 975–993 (EINSRKIHGEKNVFAGVYR). A helical membrane pass occupies residues 994–1015 (NIIFCSVVLGTFFCQILIVEVG). The Extracellular segment spans residues 1016-1025 (GKPFSCTNLT). A helical transmembrane segment spans residues 1026–1047 (MEQWMWCLFIGIGELLWGQVIS). Over 1048 to 1203 (AIPTKSLKFL…SPLQSQETPV (156 aa)) the chain is Cytoplasmic. Phosphoserine is present on residues S1064 and S1070. The segment at 1086–1103 (LRRGQILWVRGLNRIQTQ) is calmodulin-binding subdomain A. T1102 is subject to Phosphothreonine; by PKC. Q1103 carries the post-translational modification Phosphoserine. Residues 1104-1113 (IRVVKVFHSF) form a calmodulin-binding subdomain B region. Residues R1114, D1115, I1126, and S1144 each carry the phosphoserine modification.

It belongs to the cation transport ATPase (P-type) (TC 3.A.3) family. Type IIB subfamily. Interacts with PDZD11. Interacts with SLC35G1 and STIM1. Interacts with calmodulin. Ubiquitously expressed. Not detected in liver. The highest levels are found in uterus and stomach. Isoform XA is found in uterus, brain, stomach, small intestine, colon and pancreas. Isoform XB is found in uterus, skeletal muscle, lung, kidney, spleen, stomach, small intestine and pancreas. Isoform ZA is found in testis and isoform ZB is found in testis and heart.

The protein localises to the cell membrane. It localises to the cell projection. Its subcellular location is the cilium. The protein resides in the flagellum membrane. The catalysed reaction is Ca(2+)(in) + ATP + H2O = Ca(2+)(out) + ADP + phosphate + H(+). Its activity is regulated as follows. Activated by calcium/calmodulin. In terms of biological role, calcium/calmodulin-regulated and magnesium-dependent enzyme that catalyzes the hydrolysis of ATP coupled with the transport of calcium out of the cell. By regulating sperm cell calcium homeostasis, may play a role in sperm motility. The chain is Plasma membrane calcium-transporting ATPase 4 from Rattus norvegicus (Rat).